A 613-amino-acid polypeptide reads, in one-letter code: Chaperone protein DnaK (613 aa).

Residues 579–613 (MYQSASSTTQTGSGNQNSSKQENDKTVDAEYKEKS) are disordered. Over residues 581–597 (QSASSTTQTGSGNQNSS) the composition is skewed to low complexity. The segment covering 599–613 (QENDKTVDAEYKEKS) has biased composition (basic and acidic residues).

It belongs to the heat shock protein 70 family.

In terms of biological role, acts as a chaperone. This Thermoplasma volcanium (strain ATCC 51530 / DSM 4299 / JCM 9571 / NBRC 15438 / GSS1) protein is Chaperone protein DnaK.